The chain runs to 274 residues: Mitochondrial S-adenosylmethionine carrier protein (274 aa).

3 Solcar repeats span residues 4-77, 86-168, and 177-265; these read PGFT…VKSL, FKPV…LKAL, and VDSW…ARSL. Transmembrane regions (helical) follow at residues 5 to 25, 49 to 69, 85 to 105, 142 to 162, 182 to 202, and 238 to 258; these read GFTASLVAGGVAGVSVDLILF, IYAGVPSAAVGSFPNAAAFFL, HFKPVKHMLAASTGEVVACLI, RGYKSTVLREIPFSLVQFPLW, SAVCGAFAGGFAAAVTTPLDV, and FAGVLPRMAAISMGGFIFLGA.

It belongs to the mitochondrial carrier (TC 2.A.29) family.

The protein localises to the mitochondrion inner membrane. The enzyme catalyses S-adenosyl-L-homocysteine(out) + S-adenosyl-L-methionine(in) = S-adenosyl-L-homocysteine(in) + S-adenosyl-L-methionine(out). Mitochondrial S-adenosyl-L-methionine/S-adenosyl-L-homocysteine antiporter. Mediates the exchange of cytosolic S-adenosyl-L-methionine, the predominant methyl-group donor for macromolecule methylation processes, for mitochondrial S-adenosylhomocysteine(SAH), a by-product of methylation reactions. The chain is Mitochondrial S-adenosylmethionine carrier protein from Mus musculus (Mouse).